The chain runs to 357 residues: MSMFWGLNMKPERKYSQTIIKSFHISGVALDKGQEAKLYLAAEKQEYIVATVTKAIPQVALDLNFSKGDRIMFYTAGDASVSLLGYLHDIDSEDDEDDDQMTIENLLNSKAIKNSKKSEDDEDENESGEEDEEDTDDDSQIIEEYESFLENGEEEDDDDVDEDNEESGEEDEQDSDDSEAEEEQPKAKVAKLSPGASAKKSGKEQNGVAKKEEAKQQQKKKEKPEAKKEQPKAKEPAKQQPASKDPRTITGGVKIVDQVVGKGEEAKQGKRVSVYYIGRLQSNNKTFDSLLKGKPFKFALGGGEVIKGWDVGVAGMKVGGKRVITCPPHMAYGARGAPPKIGPNSTLVFEVELKAVH.

Phosphoserine is present on S92. A disordered region spans residues K113–G251. The segment covering D120–E182 has biased composition (acidic residues). S193 and S197 each carry phosphoserine. Positions E222–A237 are enriched in basic and acidic residues. In terms of domain architecture, PPIase FKBP-type spans G269 to H357.

The protein belongs to the FKBP-type PPIase family. As to expression, ubiquitously expressed, highest levels in ovary.

It localises to the nucleus. The enzyme catalyses [protein]-peptidylproline (omega=180) = [protein]-peptidylproline (omega=0). In terms of biological role, PPIases accelerate the folding of proteins. May function in a signal transduction cascade during early development. This Drosophila melanogaster (Fruit fly) protein is 39 kDa FK506-binding nuclear protein.